We begin with the raw amino-acid sequence, 317 residues long: Transaldolase (317 aa).

The Schiff-base intermediate with substrate role is filled by lysine 126.

The protein belongs to the transaldolase family. Type 1 subfamily. As to quaternary structure, homodimer.

It localises to the cytoplasm. It carries out the reaction D-sedoheptulose 7-phosphate + D-glyceraldehyde 3-phosphate = D-erythrose 4-phosphate + beta-D-fructose 6-phosphate. The protein operates within carbohydrate degradation; pentose phosphate pathway; D-glyceraldehyde 3-phosphate and beta-D-fructose 6-phosphate from D-ribose 5-phosphate and D-xylulose 5-phosphate (non-oxidative stage): step 2/3. Functionally, transaldolase is important for the balance of metabolites in the pentose-phosphate pathway. The polypeptide is Transaldolase (Burkholderia orbicola (strain AU 1054)).